The following is a 234-amino-acid chain: Ubiquitin thioesterase OTUB2 (234 aa).

Residues 40-231 (TAIRKTKGDG…TSHYNILYAA (192 aa)) enclose the OTU domain. The active site involves aspartate 48. Cysteine 51 serves as the catalytic Nucleophile. Residue histidine 224 is part of the active site.

This sequence belongs to the peptidase C65 family. Widely expressed. Expressed at higher level in brain.

It catalyses the reaction Thiol-dependent hydrolysis of ester, thioester, amide, peptide and isopeptide bonds formed by the C-terminal Gly of ubiquitin (a 76-residue protein attached to proteins as an intracellular targeting signal).. Its function is as follows. Hydrolase that can remove conjugated ubiquitin from proteins in vitro and may therefore play an important regulatory role at the level of protein turnover by preventing degradation. Mediates deubiquitination of 'Lys-11'-,'Lys-48'- and 'Lys-63'-linked polyubiquitin chains, with a preference for 'Lys-63'-linked polyubiquitin chains. This chain is Ubiquitin thioesterase OTUB2 (OTUB2), found in Homo sapiens (Human).